Here is a 227-residue protein sequence, read N- to C-terminus: Phosphoribosylformylglycinamidine synthase subunit PurQ (227 aa).

Residues 2–226 (KFAVIQFPGS…VKAWKEEQVN (225 aa)) enclose the Glutamine amidotransferase type-1 domain. The Nucleophile role is filled by Cys86. Active-site residues include His195 and Glu197.

Part of the FGAM synthase complex composed of 1 PurL, 1 PurQ and 2 PurS subunits.

It is found in the cytoplasm. The catalysed reaction is N(2)-formyl-N(1)-(5-phospho-beta-D-ribosyl)glycinamide + L-glutamine + ATP + H2O = 2-formamido-N(1)-(5-O-phospho-beta-D-ribosyl)acetamidine + L-glutamate + ADP + phosphate + H(+). The enzyme catalyses L-glutamine + H2O = L-glutamate + NH4(+). Its pathway is purine metabolism; IMP biosynthesis via de novo pathway; 5-amino-1-(5-phospho-D-ribosyl)imidazole from N(2)-formyl-N(1)-(5-phospho-D-ribosyl)glycinamide: step 1/2. Its function is as follows. Part of the phosphoribosylformylglycinamidine synthase complex involved in the purines biosynthetic pathway. Catalyzes the ATP-dependent conversion of formylglycinamide ribonucleotide (FGAR) and glutamine to yield formylglycinamidine ribonucleotide (FGAM) and glutamate. The FGAM synthase complex is composed of three subunits. PurQ produces an ammonia molecule by converting glutamine to glutamate. PurL transfers the ammonia molecule to FGAR to form FGAM in an ATP-dependent manner. PurS interacts with PurQ and PurL and is thought to assist in the transfer of the ammonia molecule from PurQ to PurL. This is Phosphoribosylformylglycinamidine synthase subunit PurQ from Listeria monocytogenes serovar 1/2a (strain ATCC BAA-679 / EGD-e).